The chain runs to 2173 residues: Mediator of DNA damage checkpoint protein 1 (2173 aa).

Acidic residues predominate over residues 1–19; sequence MEDTQAIDWDVEEEEETEQ. Residues 1-22 form a disordered region; it reads MEDTQAIDWDVEEEEETEQSSE. Residues 1–150 are interaction with CHEK2; it reads MEDTQAIDWD…SRGPLTVEET (150 aa). Residues 2 to 222 form an interaction with the MRN complex region; the sequence is EDTQAIDWDV…PFAFNLNSDT (221 aa). Threonine 4 is subject to Phosphothreonine. The FHA domain occupies 54–105; it reads NVVGRMPDCSVALPFPSISKQHAEIEILAWDKAPILRDCGSLNGTQILRPPK. The residue at position 108 (serine 108) is a Phosphoserine. The required for nuclear localization (NLS1) stretch occupies residues 145-570; that stretch reads LTVEETPRVQ…PAKLLVVSLE (426 aa). At threonine 146 the chain carries Phosphothreonine. 4 positions are modified to phosphoserine: serine 168, serine 176, serine 198, and serine 220. Residues 198 to 320 are disordered; sequence SDEEGHSPVL…PPGRPAEVHL (123 aa). The residue at position 222 (threonine 222) is a Phosphothreonine. The span at 227–244 shows a compositional bias: low complexity; the sequence is GQQSATEEASSAARRGAT. Residues 259 to 276 are compositionally biased toward basic and acidic residues; the sequence is QLEKDQPSVKERDNDTKV. Serine 301 is subject to Phosphoserine. A Phosphothreonine modification is found at threonine 303. The segment covering 308–320 has biased composition (basic and acidic residues); that stretch reads DSRPPGRPAEVHL. Position 331 is a phosphoserine (serine 331). Threonine 333 carries the post-translational modification Phosphothreonine. Residues 359-383 form a disordered region; that stretch reads GTRGPGAPGLSHLQESQAGSDTDVE. Phosphoserine occurs at positions 374 and 378. Threonine 380 carries the phosphothreonine modification. Phosphoserine occurs at positions 396, 399, and 404. Phosphothreonine is present on threonine 406. A Phosphoserine modification is found at serine 413. Positions 444-515 are disordered; it reads LQRSQTTTGR…SSPGIHLERS (72 aa). Threonine 451 is subject to Phosphothreonine. Serine 455 carries the post-translational modification Phosphoserine. Threonine 457 carries the post-translational modification Phosphothreonine. Phosphoserine is present on residues serine 487, serine 497, serine 500, serine 506, serine 507, and serine 515. Threonine 525 is modified (phosphothreonine). Phosphoserine is present on serine 592. Lysine 618 participates in a covalent cross-link: Glycyl lysine isopeptide (Lys-Gly) (interchain with G-Cter in SUMO1); alternate. Lysine 618 participates in a covalent cross-link: Glycyl lysine isopeptide (Lys-Gly) (interchain with G-Cter in SUMO2); alternate. Serine 631 carries the post-translational modification Phosphoserine. Disordered stretches follow at residues 652–697 and 773–1770; these read VDTD…EDPD and HLEA…TLRS. Residues 673–687 are compositionally biased toward basic and acidic residues; that stretch reads GREREQHVGRTKDSE. The span at 688 to 697 shows a compositional bias: acidic residues; that stretch reads DNCDDSEDPD. Residues serine 782 and serine 795 each carry the phosphoserine modification. At lysine 814 the chain carries N6-acetyllysine. Basic and acidic residues-rich tracts occupy residues 821–846, 853–864, 870–903, and 916–953; these read ETAERVGPERGPLERETEKLLPERQT, ELTRGIQDREQK, DTQRQESDKNGESASPERDRESLKVEIETSKEIQ, and AFEREVERPVADRECEPAELEEKVPKVILERDAQRGEP. A phosphoserine mark is found at serine 957, serine 1000, serine 1035, serine 1070, and serine 1088. Residues 957-969 show a composition bias toward polar residues; it reads SQDQKGQASSPTS. Basic and acidic residues predominate over residues 1079–1090; that stretch reads TIRKTGQDRSQE. Residues 1105–1115 show a composition bias toward basic residues; sequence PKPKIITRKSS. Polar residues predominate over residues 1131-1156; that stretch reads PSTSTAQPVTPKPTSQATRSRTNRSS. An interaction with the PRKDC complex region spans residues 1150 to 1694; that stretch reads SRTNRSSVKT…KNRSSVKTPE (545 aa). Low complexity predominate over residues 1157 to 1169; that stretch reads VKTPEPVVPTVPE. At threonine 1159 the chain carries Phosphothreonine. Positions 1171 to 1189 are enriched in polar residues; it reads QPSTSTDQPVASEPTSQAT. Threonine 1200 bears the Phosphothreonine mark. Serine 1237 is modified (phosphoserine). Residues threonine 1241, threonine 1282, and threonine 1304 each carry the phosphothreonine modification. Over residues 1280–1292 the composition is skewed to low complexity; that stretch reads VKTPEPVVPTVPE. Polar residues predominate over residues 1294-1320; sequence QPSTSTDQPVTSEPTSQATRGRTNRSS. The span at 1321–1333 shows a compositional bias: low complexity; sequence VKTPEPVVPTVPE. A compositionally biased stretch (polar residues) spans 1335 to 1353; sequence QPSTSTDQPVASEPTSQAT. Over residues 1390–1402 the composition is skewed to low complexity; sequence TSRTTRSRTNMSS. Composition is skewed to polar residues over residues 1418–1434, 1456–1487, 1499–1527, and 1540–1559; these read PSTSTEQPVITEPTYQP, KLQSSTSTDQPITPEPTSQATRGRTNRSSVKS, QPSTSTHQPVTAKHTSQATRGRTNRSSVK, and QPSTSTHQPITPEPTSQATR. Phosphoserine occurs at positions 1483 and 1484. Position 1486 is an N6-acetyllysine (lysine 1486). A phosphothreonine mark is found at threonine 1509 and threonine 1550. A compositionally biased stretch (low complexity) spans 1567 to 1578; it reads VKTPKIVVPTVP. The span at 1581 to 1598 shows a compositional bias: polar residues; the sequence is QASTSTDQPVTSEPTSRT. Threonine 1617 and threonine 1632 each carry phosphothreonine. Over residues 1626 to 1639 the composition is skewed to polar residues; that stretch reads STDQPITPKPTSRA. Position 1648 is a phosphoserine (serine 1648). 2 positions are modified to phosphothreonine: threonine 1651 and threonine 1673. Residues 1664–1680 are compositionally biased toward polar residues; sequence PSTSRSQLVTPEPTSRA. Serine 1688 carries the post-translational modification Phosphoserine. Phosphothreonine is present on residues threonine 1692, threonine 1714, threonine 1748, and threonine 1755. Polar residues predominate over residues 1705 to 1721; sequence PTTSTDQPVTPKPTSRA. The span at 1761–1770 shows a compositional bias: polar residues; it reads QGSQSKTLRS. Serine 1765 is subject to Phosphoserine. Residue threonine 1781 is modified to Phosphothreonine. Residues 1782–2173 form a required for nuclear localization (NLS2) region; that stretch reads PEFQSPVTTD…VLSPLEMSST (392 aa). Residues serine 1786 and serine 1795 each carry the phosphoserine modification. Residues 1809-1971 form a disordered region; the sequence is RATGNPGSLT…NRSLRRTKLN (163 aa). Lysine 1824 participates in a covalent cross-link: Glycyl lysine isopeptide (Lys-Gly) (interchain with G-Cter in SUMO2). Residue serine 1859 is modified to Phosphoserine. Lysine 1874 participates in a covalent cross-link: Glycyl lysine isopeptide (Lys-Gly) (interchain with G-Cter in SUMO2). Threonine 1884 is subject to Phosphothreonine. At serine 1904 the chain carries Phosphoserine. Positions 1907–1920 are enriched in polar residues; it reads HQKQPQRGEVSQKT. Lysine 1924 participates in a covalent cross-link: Glycyl lysine isopeptide (Lys-Gly) (interchain with G-Cter in SUMO1); alternate. Lysine 1924 participates in a covalent cross-link: Glycyl lysine isopeptide (Lys-Gly) (interchain with G-Cter in SUMO2); alternate. Over residues 1931–1941 the composition is skewed to basic and acidic residues; the sequence is AEKPGKEEDVM. Threonine 1942 bears the Phosphothreonine mark. BRCT domains lie at 1976–2054 and 2075–2166; these read APKV…EYVV and RERR…FVLS. Position 2027 is an omega-N-methylarginine (arginine 2027).

In terms of assembly, homodimer. Interacts with H2AX, which requires phosphorylation of H2AX on 'Ser-139'. Interacts with the MRN complex, composed of MRE11, RAD50, and NBN. Interacts with CHEK2, which requires ATM-mediated phosphorylation of 'Thr-68' within the FHA domain of CHEK2. Interacts constitutively with the BRCA1-BARD1 complex, SMC1A and TP53BP1. Interacts with ATM and FANCD2, and these interactions are reduced upon DNA damage. Also interacts with the PRKDC complex, composed of XRCC6/KU70, XRCC5/KU80 and PRKDC/XRCC7. This interaction may be required for PRKDC autophosphorylation, which is essential for DNA double strand break (DSB) repair. When phosphorylated by ATM, interacts with RNF8 (via FHA domain). Interacts with CEP164. When phosphorylated, interacts with APTX (via FHA-like domain). Interacts (when phosphorylated) with TOPBP1; promoting TOPBP1 localization to DNA damage sites during mitosis. Interacts (when phosphorylated) with NBN; promoting NBN and MRN complex localization to DNA damage sites. Phosphorylated upon exposure to ionizing radiation (IR), ultraviolet radiation (UV), and hydroxyurea (HU). Phosphorylation in response to IR requires ATM, NBN, and possibly CHEK2. Also phosphorylated during the G2/M phase of the cell cycle and during activation of the mitotic spindle checkpoint. Phosphorylation at Thr-4 by ATM stabilizes and enhances homodimerization via the FHA domain. Phosphorylated at Ser-168 and Ser-198 by CK2 in response to DNA damage during mitosis, promoting interaction with TOPBP1. Phosphorylated by CK2 in response to DNA damage, promoting interaction with NBN and recruitment of the MRN complex to DNA damage sites. Post-translationally, sumoylation at Lys-1924 by PIAS4 following DNA damage promotes ubiquitin-mediated degradation. In terms of processing, ubiquitinated by RNF4, leading to proteasomal degradation; undergoes 'Lys-48'-linked polyubiquitination.

The protein localises to the nucleus. Its subcellular location is the chromosome. Functionally, histone reader protein required for checkpoint-mediated cell cycle arrest in response to DNA damage within both the S phase and G2/M phases of the cell cycle. Specifically recognizes and binds histone H2AX phosphorylated at 'Ser-139', a marker of DNA damage, serving as a scaffold for the recruitment of DNA repair and signal transduction proteins to discrete foci of DNA damage sites. Also required for downstream events subsequent to the recruitment of these proteins. These include phosphorylation and activation of the ATM, CHEK1 and CHEK2 kinases, and stabilization of TP53/p53 and apoptosis. ATM and CHEK2 may also be activated independently by a parallel pathway mediated by TP53BP1. Required for chromosomal stability during mitosis by promoting recruitment of TOPBP1 to DNA double strand breaks (DSBs): TOPBP1 forms filamentous assemblies that bridge MDC1 and tether broken chromosomes during mitosis. Required for the repair of DSBs via homologous recombination by promoting recruitment of NBN component of the MRN complex to DSBs. This chain is Mediator of DNA damage checkpoint protein 1 (MDC1), found in Macaca mulatta (Rhesus macaque).